Consider the following 83-residue polypeptide: uncharacterized protein (83 aa).

This is an uncharacterized protein from Synechocystis sp. (strain ATCC 27184 / PCC 6803 / Kazusa).